A 400-amino-acid chain; its full sequence is tRNA(Met) cytidine acetate ligase (400 aa).

ATP contacts are provided by residues 7-20 (IVEY…HLYH), glycine 101, asparagine 159, and arginine 184.

The protein belongs to the TmcAL family.

It localises to the cytoplasm. It catalyses the reaction cytidine(34) in elongator tRNA(Met) + acetate + ATP = N(4)-acetylcytidine(34) in elongator tRNA(Met) + AMP + diphosphate. In terms of biological role, catalyzes the formation of N(4)-acetylcytidine (ac(4)C) at the wobble position of elongator tRNA(Met), using acetate and ATP as substrates. First activates an acetate ion to form acetyladenylate (Ac-AMP) and then transfers the acetyl group to tRNA to form ac(4)C34. The chain is tRNA(Met) cytidine acetate ligase from Caldicellulosiruptor saccharolyticus (strain ATCC 43494 / DSM 8903 / Tp8T 6331).